Here is a 145-residue protein sequence, read N- to C-terminus: Ribosomal RNA large subunit methyltransferase H (145 aa).

S-adenosyl-L-methionine is bound by residues L64, G93, and 112–117 (LSALTF).

The protein belongs to the RNA methyltransferase RlmH family. In terms of assembly, homodimer.

Its subcellular location is the cytoplasm. The enzyme catalyses pseudouridine(1915) in 23S rRNA + S-adenosyl-L-methionine = N(3)-methylpseudouridine(1915) in 23S rRNA + S-adenosyl-L-homocysteine + H(+). In terms of biological role, specifically methylates the pseudouridine at position 1915 (m3Psi1915) in 23S rRNA. The sequence is that of Ribosomal RNA large subunit methyltransferase H from Prochlorococcus marinus (strain SARG / CCMP1375 / SS120).